The primary structure comprises 938 residues: Scm-like with four MBT domains protein 2 (938 aa).

The interval 1–32 (MERYLPVSKKRNSSSSLEKITGSANGNGTLYS) is disordered. The segment covering 13–30 (SSSSLEKITGSANGNGTL) has biased composition (polar residues). MBT repeat units follow at residues 43–143 (FSWG…LRPP), 151–255 (SDWT…MDPP), 265–371 (FEWK…LAPP), and 379–475 (FNWV…LTTP). The interval 742-836 (PEGIPESLPE…TVPTTASSNN (95 aa)) is disordered. Composition is skewed to basic and acidic residues over residues 765 to 777 (TEQE…DTAR) and 809 to 822 (RNSE…VERA). The 64-residue stretch at 868 to 931 (WSVTDVVRFI…CHQIERVKVA (64 aa)) folds into the SAM domain.

In terms of assembly, interacts with YY1. Interacts with methylated histones H3K9me2 and H4K20me2. In terms of tissue distribution, expressed in testis and, at much lower levels, in ovary.

The protein resides in the nucleus. In terms of biological role, transcriptional repressor of HOXB13 gene. This Mus musculus (Mouse) protein is Scm-like with four MBT domains protein 2 (Sfmbt2).